A 264-amino-acid polypeptide reads, in one-letter code: Octanoyltransferase (264 aa).

Residues 74–262 (GTASELVWLV…AFESVFGPRQ (189 aa)) form the BPL/LPL catalytic domain. Substrate contacts are provided by residues 113-120 (RGGEYTYH), 193-195 (AIG), and 206-208 (GIA). C224 acts as the Acyl-thioester intermediate in catalysis.

Belongs to the LipB family.

It localises to the cytoplasm. It catalyses the reaction octanoyl-[ACP] + L-lysyl-[protein] = N(6)-octanoyl-L-lysyl-[protein] + holo-[ACP] + H(+). The protein operates within protein modification; protein lipoylation via endogenous pathway; protein N(6)-(lipoyl)lysine from octanoyl-[acyl-carrier-protein]: step 1/2. Functionally, catalyzes the transfer of endogenously produced octanoic acid from octanoyl-acyl-carrier-protein onto the lipoyl domains of lipoate-dependent enzymes. Lipoyl-ACP can also act as a substrate although octanoyl-ACP is likely to be the physiological substrate. This is Octanoyltransferase from Brucella melitensis biotype 1 (strain ATCC 23456 / CCUG 17765 / NCTC 10094 / 16M).